Consider the following 92-residue polypeptide: DNA-directed RNA polymerase subunit Rpo11 (92 aa).

This sequence belongs to the archaeal Rpo11/eukaryotic RPB11/RPC19 RNA polymerase subunit family. As to quaternary structure, part of the RNA polymerase complex.

It is found in the cytoplasm. The catalysed reaction is RNA(n) + a ribonucleoside 5'-triphosphate = RNA(n+1) + diphosphate. Functionally, DNA-dependent RNA polymerase (RNAP) catalyzes the transcription of DNA into RNA using the four ribonucleoside triphosphates as substrates. This chain is DNA-directed RNA polymerase subunit Rpo11, found in Methanosarcina mazei (strain ATCC BAA-159 / DSM 3647 / Goe1 / Go1 / JCM 11833 / OCM 88) (Methanosarcina frisia).